A 375-amino-acid polypeptide reads, in one-letter code: Chaperone protein DnaJ (375 aa).

One can recognise a J domain in the interval 4-68; that stretch reads DYYEVLGVGK…QKRAQYDRFG (65 aa). Residues 129-211 form a CR-type zinc finger; sequence GKETDVEIPK…CRGSGRVKVR (83 aa). The Zn(2+) site is built by Cys-142, Cys-145, Cys-159, Cys-162, Cys-185, Cys-188, Cys-199, and Cys-202. CXXCXGXG motif repeat units follow at residues 142-149, 159-166, 185-192, and 199-206; these read CDTCHGSG, CKTCSGTG, CTTCEGKG, and CSSCRGSG. The disordered stretch occupies residues 349-375; it reads LSGEKPGQHGGEDEGFFEKMKRAFRGE.

It belongs to the DnaJ family. In terms of assembly, homodimer. It depends on Zn(2+) as a cofactor.

The protein localises to the cytoplasm. Its function is as follows. Participates actively in the response to hyperosmotic and heat shock by preventing the aggregation of stress-denatured proteins and by disaggregating proteins, also in an autonomous, DnaK-independent fashion. Unfolded proteins bind initially to DnaJ; upon interaction with the DnaJ-bound protein, DnaK hydrolyzes its bound ATP, resulting in the formation of a stable complex. GrpE releases ADP from DnaK; ATP binding to DnaK triggers the release of the substrate protein, thus completing the reaction cycle. Several rounds of ATP-dependent interactions between DnaJ, DnaK and GrpE are required for fully efficient folding. Also involved, together with DnaK and GrpE, in the DNA replication of plasmids through activation of initiation proteins. This Brevibacillus choshinensis protein is Chaperone protein DnaJ.